Here is a 156-residue protein sequence, read N- to C-terminus: MPRKGPAPSRPLVNDPVYGSQLVTQLVNKVLLDGKKSIAERIVYGALEQARDKTGTDPVVTLKRAMDNVKPALEVRSRRVGGATYQVPVEVRPDRSTTLALRWLVTFSRARREKTMVERLANEILDASNGLGASVKRREDTHKMAEANRAFAHYRW.

Belongs to the universal ribosomal protein uS7 family. Part of the 30S ribosomal subunit. Contacts proteins S9 and S11.

One of the primary rRNA binding proteins, it binds directly to 16S rRNA where it nucleates assembly of the head domain of the 30S subunit. Is located at the subunit interface close to the decoding center, probably blocks exit of the E-site tRNA. The polypeptide is Small ribosomal subunit protein uS7 (Mycobacteroides abscessus (strain ATCC 19977 / DSM 44196 / CCUG 20993 / CIP 104536 / JCM 13569 / NCTC 13031 / TMC 1543 / L948) (Mycobacterium abscessus)).